Consider the following 85-residue polypeptide: Large ribosomal subunit protein bL27 (85 aa).

A disordered region spans residues 1 to 21 (MAHKKAGGSTRNGRDSRGKRL).

This sequence belongs to the bacterial ribosomal protein bL27 family.

In Blochmanniella floridana, this protein is Large ribosomal subunit protein bL27.